Reading from the N-terminus, the 333-residue chain is Malate dehydrogenase (333 aa).

Residues 10-15 (GGGQIG) and aspartate 34 each bind NAD(+). Arginine 83 and arginine 89 together coordinate substrate. Residues asparagine 96 and 119-121 (ITN) contribute to the NAD(+) site. 2 residues coordinate substrate: asparagine 121 and arginine 152. The Proton acceptor role is filled by histidine 176.

This sequence belongs to the LDH/MDH superfamily. MDH type 3 family.

The catalysed reaction is (S)-malate + NAD(+) = oxaloacetate + NADH + H(+). Catalyzes the reversible oxidation of malate to oxaloacetate. The polypeptide is Malate dehydrogenase (Parvibaculum lavamentivorans (strain DS-1 / DSM 13023 / NCIMB 13966)).